The chain runs to 729 residues: Hydroxamate siderophore receptor FhuE (729 aa).

Positions 1 to 36 (MLSTQFNRDNQYQAITKPSLLAGCIALALLPSAAFA) are cleaved as a signal peptide. The short motif at 42–49 (ETVIVEGS) is the TonB box element. Positions 48 to 72 (GSATAPDDGENDYSVTSTSAGTKMQ) are disordered. Polar residues predominate over residues 60–72 (YSVTSTSAGTKMQ). The TBDR plug domain maps to 74-183 (TQRDIPQSVT…PSAAINMVRK (110 aa)). Fe(III)-coprogen-binding residues include Arg-117, Arg-142, Trp-275, Tyr-357, Asn-373, and Trp-416. A TBDR beta-barrel domain is found at 189 to 729 (EFKGDVSAEY…NFSITGTYQF (541 aa)). The TonB C-terminal box motif lies at 712–729 (SIVYGTPRNFSITGTYQF).

The protein belongs to the TonB-dependent receptor family.

Its subcellular location is the cell outer membrane. Involved in the active transport across the outer membrane of iron complexed with linear hydroxamate siderophores coprogen, rhodotorulic acid and ferrioxamine B. Binds Fe-coprogen with high affinity, rhodotorulic acid to a lesser extent, and weakly to ferrioxamine B. Selective for planar siderophores. Does not use cyclic siderophores ferrichrome nor ferrioxamine E as substrates. The chain is Hydroxamate siderophore receptor FhuE from Escherichia coli (strain K12).